We begin with the raw amino-acid sequence, 254 residues long: Alcohol dehydrogenase (254 aa).

An NAD(+)-binding site is contributed by 10–33 (FVAGLGGIGLDTSREIVKSGPKNL). S138 provides a ligand contact to substrate. Catalysis depends on Y151, which acts as the Proton acceptor.

It belongs to the short-chain dehydrogenases/reductases (SDR) family. In terms of assembly, homodimer.

The enzyme catalyses a primary alcohol + NAD(+) = an aldehyde + NADH + H(+). It catalyses the reaction a secondary alcohol + NAD(+) = a ketone + NADH + H(+). This is Alcohol dehydrogenase (Adh) from Drosophila borealis (Fruit fly).